The following is a 269-amino-acid chain: Energy-coupling factor transporter ATP-binding protein EcfA1 (269 aa).

In terms of domain architecture, ABC transporter spans 8–242; the sequence is IEFKDVSFQY…EEALISVGLD (235 aa). 42-49 serves as a coordination point for ATP; it reads GHNGSGKS.

It belongs to the ABC transporter superfamily. Energy-coupling factor EcfA family. In terms of assembly, forms a stable energy-coupling factor (ECF) transporter complex composed of 2 membrane-embedded substrate-binding proteins (S component), 2 ATP-binding proteins (A component) and 2 transmembrane proteins (T component).

The protein resides in the cell membrane. Its function is as follows. ATP-binding (A) component of a common energy-coupling factor (ECF) ABC-transporter complex. Unlike classic ABC transporters this ECF transporter provides the energy necessary to transport a number of different substrates. This Staphylococcus epidermidis (strain ATCC 35984 / DSM 28319 / BCRC 17069 / CCUG 31568 / BM 3577 / RP62A) protein is Energy-coupling factor transporter ATP-binding protein EcfA1.